A 396-amino-acid chain; its full sequence is Ribosomal RNA large subunit methyltransferase I (396 aa).

Positions 2 to 81 (TVRLILAKGR…ESIDIDFFVR (80 aa)) constitute a PUA domain.

This sequence belongs to the methyltransferase superfamily. RlmI family.

It localises to the cytoplasm. It carries out the reaction cytidine(1962) in 23S rRNA + S-adenosyl-L-methionine = 5-methylcytidine(1962) in 23S rRNA + S-adenosyl-L-homocysteine + H(+). Its function is as follows. Specifically methylates the cytosine at position 1962 (m5C1962) of 23S rRNA. The protein is Ribosomal RNA large subunit methyltransferase I of Erwinia tasmaniensis (strain DSM 17950 / CFBP 7177 / CIP 109463 / NCPPB 4357 / Et1/99).